Here is a 349-residue protein sequence, read N- to C-terminus: Nitrilase, bromoxynil-specific (349 aa).

Residues 5–274 enclose the CN hydrolase domain; the sequence is FKAAAVQAEP…EGIVYAEIDL (270 aa). The active-site Proton acceptor is Glu-45. The active-site Proton donor is the Lys-127. Cys-161 serves as the catalytic Nucleophile.

Belongs to the carbon-nitrogen hydrolase superfamily. Nitrilase family. As to quaternary structure, homodimer.

It carries out the reaction a nitrile + 2 H2O = a carboxylate + NH4(+). In terms of biological role, specific for the herbicide bromoxynil (3,5-dibromo-4-hydroxybenzonitrile); converts it to its metabolite 3,5-dibromo-4-hydroxybenzoic acid. The sequence is that of Nitrilase, bromoxynil-specific (bxn) from Klebsiella pneumoniae subsp. ozaenae.